Consider the following 335-residue polypeptide: MTHTTDVVIIGTGPVGLFAVFQAGMLGMKCHIIDAQEIIGGQCITLYPEKPIYDIPAYPKIAAEELIKQLELQAAPFKPVYHLNQQAIELNKQDDFFEIKTSKNTLIKSKVIIIAAGAGSFGPNKPPLANIEDFEGKSVFYFINDKSKFAGKNIVIAGGGDSAVDWAISLSEIANKIYLVHRRDKFTAAPESVRQLRHIAETGKIELVTGYQLNALDGNNSELQSVIVKDLQNNTRKLDANILLPFFGLKQDLGSLANWGLNVKLHHIEVDNSYYQTNIEGIYAIGDIAHYAGKLKLILTGFAEAASSLHHAYSRVFDGKALHFEYSTTKYGERK.

The FAD site is built by D34, Q42, Y47, A87, F121, D287, and T328.

The protein belongs to the ferredoxin--NADP reductase type 2 family. Homodimer. The cofactor is FAD.

The enzyme catalyses 2 reduced [2Fe-2S]-[ferredoxin] + NADP(+) + H(+) = 2 oxidized [2Fe-2S]-[ferredoxin] + NADPH. The polypeptide is Ferredoxin--NADP reductase (Rickettsia felis (strain ATCC VR-1525 / URRWXCal2) (Rickettsia azadi)).